We begin with the raw amino-acid sequence, 310 residues long: Putrescinyltransferase (310 aa).

This sequence belongs to the thymidine aminotransferase family.

It catalyses the reaction 5-phosphomethyl-dUMP in DNA + putrescine = 5-N(alpha)-putrescinyl-dTMP in DNA + phosphate. Transfers putrescine to 5-phosphomethyl-2'-deoxyuridine (5-PmdU) to produce 5-Nalpha-putrescinylthymidine (Nalpha-PutT) as a step in the pathway leading to thymidine hypermodifications in the viral genome. As a final result of the pathway of hypermodification, Nalpha-PutT substitutes for about 50% of thymidines in the viral DNA. These modifications probably prevent degradation of viral genome by the host restriction-modification antiviral defense system. The polypeptide is Putrescinyltransferase (Delftia phage PhiW-14 (Deftia acidovorans bacteriophage phiW-14)).